We begin with the raw amino-acid sequence, 1210 residues long: uncharacterized protein (1210 aa).

The protein to E.coli molybdate metabolism regulator (MolR).

This is an uncharacterized protein from Escherichia coli (strain K12).